The sequence spans 605 residues: Elongation factor 4 (605 aa).

The 183-residue stretch at 11 to 193 (KRIRNFSIIA…KVVSNIPSPR (183 aa)) folds into the tr-type G domain. Residues 23 to 28 (DHGKST) and 140 to 143 (NKID) each bind GTP.

It belongs to the TRAFAC class translation factor GTPase superfamily. Classic translation factor GTPase family. LepA subfamily.

It is found in the cell membrane. It catalyses the reaction GTP + H2O = GDP + phosphate + H(+). Functionally, required for accurate and efficient protein synthesis under certain stress conditions. May act as a fidelity factor of the translation reaction, by catalyzing a one-codon backward translocation of tRNAs on improperly translocated ribosomes. Back-translocation proceeds from a post-translocation (POST) complex to a pre-translocation (PRE) complex, thus giving elongation factor G a second chance to translocate the tRNAs correctly. Binds to ribosomes in a GTP-dependent manner. The polypeptide is Elongation factor 4 (Phytoplasma mali (strain AT)).